Reading from the N-terminus, the 20-residue chain is 44 kDa cell wall protein 2 (20 aa).

It localises to the secreted. It is found in the cell wall. The sequence is that of 44 kDa cell wall protein 2 from Solanum lycopersicum (Tomato).